Consider the following 846-residue polypeptide: MSASAARSRNKQSKLRDDEQLDISKDEFNRIQEAFGREEFRKLFFDYVEEIQDPENRKIYEEEITQLEKERGVEVRFIHPKPGFVIKTALDGELKCFINIAGSEEIERPKNEVATDPSSGSRGLSWSIPMAQTSSRDDCDAKNNHCKVFDVVFHPDALHLAKRNKQFRQCLIDTALDAVEREYKVSLDRANLKFPKLDYKGIPRPTVIRKLADNPTAEEQEPHPLAHMFPTKPPAPGKPEPRVLPMKTKPTPVPEFTVPRYSIKHSHDVDLSEYTDELDAKLHVTVPRSLVVEIELPLLRSTAECQLDVTSKSVYLFSERQGAKYRLKLDLPFSVDDKAGQARFDTDMRRLSITLPVVRKSTKEEAQMHDTLRHFSREDSGVELHSNSESPVEEDPDGELSDSKADISEISSPTTATVRLANSPFLKNSVHYQLPSKFDCNVLDNVMAFVLHVPNVQPDSIEQLREQRSLHLQFATIGSGYYPTHYAFYVELPAEHEDSAIESVEAEAWDNNVVLKLCLSSQSETPASYLAGLDATELKEYPVHGQYNVKSSGKANAKENAPLDVKFVHNQEGQALKVTIRPGTKEEEEKGNQDQEPESDKQHQQQSQNKKAGKKQRKRNKKERSLSESACADMIFQEPLAKNPELQPKTMFKFPSQRKQRSYSECNDSIGGSHRGILKRFSRYGPRPSMSDSCSSIDDCSSYSCSVDASGTSLFSHSFGGIPEEDRSDAGLSESCKKTVRFNDHIMKQVFRLDSSILGQRKKNQKRRDLKLRAQQRRLSEGDSVDYEETRGSALKQQENQSRNCNKPNGGSVLHDSGLDLTGAPGAHSNHNESEAKNALMFEMDD.

Disordered stretches follow at residues T216–E240, L372–A405, Q574–C631, and K762–D846. Over residues L372 to V382 the composition is skewed to basic and acidic residues. S380 carries the phosphoserine modification. The span at P391–L400 shows a compositional bias: acidic residues. The segment covering G583–H603 has biased composition (basic and acidic residues). Basic residues-rich tracts occupy residues K611–K622 and K762–Q776. Residue S780 is modified to Phosphoserine. Polar residues predominate over residues L795–N809.

The protein belongs to the PIH1 family. Kintoun subfamily. As to quaternary structure, interacts with Pp1alpha-96A, Pp1-87B, Pp1-13C and flw.

The protein localises to the cytoplasm. Required for cytoplasmic pre-assembly of axonemal dyneins, thereby playing a central role in motility in cilia and flagella. Involved in pre-assembly of dynein arm complexes in the cytoplasm before intraflagellar transport loads them for the ciliary compartment. In Drosophila yakuba (Fruit fly), this protein is Protein kintoun.